The primary structure comprises 499 residues: Uridine-cytidine kinase A (499 aa).

Residues 1 to 44 form a disordered region; sequence MSDNSTTKVTTNDSPSLTTTTSTTTAPTTTTTTTTTPTHNHDTT. The span at 10-38 shows a compositional bias: low complexity; that stretch reads TTNDSPSLTTTTSTTTAPTTTTTTTTTPT. 78–85 is an ATP binding site; the sequence is GGSASGKT.

It belongs to the uridine kinase family.

The enzyme catalyses uridine + ATP = UMP + ADP + H(+). It carries out the reaction cytidine + ATP = CMP + ADP + H(+). Its pathway is pyrimidine metabolism; CTP biosynthesis via salvage pathway; CTP from cytidine: step 1/3. It participates in pyrimidine metabolism; UMP biosynthesis via salvage pathway; UMP from uridine: step 1/1. Functionally, catalyzes the conversion of uridine into uridine monophosphate and cytidine into cytidine monophosphate in the pyrimidine salvage pathway. This chain is Uridine-cytidine kinase A (udkA), found in Dictyostelium discoideum (Social amoeba).